Reading from the N-terminus, the 141-residue chain is Albumin-8 (141 aa).

An N-terminal signal peptide occupies residues 1 to 25; sequence MARFSIVFAAAGVLLLVAMAPVSEA. Residues 26–38 constitute a propeptide that is removed on maturation; that stretch reads STTTIITTIIEEN. Cystine bridges form between Cys49–Cys100, Cys62–Cys89, Cys90–Cys132, and Cys102–Cys139.

It belongs to the 2S seed storage albumins family. Heterodimer; disulfide-linked.

In terms of biological role, this is a 2S seed storage protein. The sequence is that of Albumin-8 from Helianthus annuus (Common sunflower).